The following is a 129-amino-acid chain: Beta-galactoside-binding lectin (129 aa).

Ser-1 is modified (N-acetylserine). One can recognise a Galectin domain in the interval 4-129; the sequence is GVVDERMSFK…EARIYSIEIK (126 aa). 69-75 is a binding site for a beta-D-galactoside; sequence WGTEQRE.

This protein binds beta-galactoside. Its physiological function is not yet known. The protein is Beta-galactoside-binding lectin of Electrophorus electricus (Electric eel).